The primary structure comprises 127 residues: Aspartate 1-decarboxylase (127 aa).

The active-site Schiff-base intermediate with substrate; via pyruvic acid is the Ser-25. At Ser-25 the chain carries Pyruvic acid (Ser). Residue Thr-57 participates in substrate binding. The Proton donor role is filled by Tyr-58. 73–75 (GSA) lines the substrate pocket.

The protein belongs to the PanD family. In terms of assembly, heterooctamer of four alpha and four beta subunits. Pyruvate is required as a cofactor. Post-translationally, is synthesized initially as an inactive proenzyme, which is activated by self-cleavage at a specific serine bond to produce a beta-subunit with a hydroxyl group at its C-terminus and an alpha-subunit with a pyruvoyl group at its N-terminus.

The protein resides in the cytoplasm. The catalysed reaction is L-aspartate + H(+) = beta-alanine + CO2. It functions in the pathway cofactor biosynthesis; (R)-pantothenate biosynthesis; beta-alanine from L-aspartate: step 1/1. Its function is as follows. Catalyzes the pyruvoyl-dependent decarboxylation of aspartate to produce beta-alanine. The chain is Aspartate 1-decarboxylase from Laribacter hongkongensis (strain HLHK9).